The following is a 962-amino-acid chain: Glycine dehydrogenase (decarboxylating) (962 aa).

Lys-709 is subject to N6-(pyridoxal phosphate)lysine.

It belongs to the GcvP family. The glycine cleavage system is composed of four proteins: P, T, L and H. It depends on pyridoxal 5'-phosphate as a cofactor.

The catalysed reaction is N(6)-[(R)-lipoyl]-L-lysyl-[glycine-cleavage complex H protein] + glycine + H(+) = N(6)-[(R)-S(8)-aminomethyldihydrolipoyl]-L-lysyl-[glycine-cleavage complex H protein] + CO2. Functionally, the glycine cleavage system catalyzes the degradation of glycine. The P protein binds the alpha-amino group of glycine through its pyridoxal phosphate cofactor; CO(2) is released and the remaining methylamine moiety is then transferred to the lipoamide cofactor of the H protein. The protein is Glycine dehydrogenase (decarboxylating) of Shewanella loihica (strain ATCC BAA-1088 / PV-4).